The primary structure comprises 208 residues: Probable DNA-3-methyladenine glycosylase (208 aa).

This sequence belongs to the DNA glycosylase MPG family.

The protein resides in the nucleus. The enzyme catalyses Hydrolysis of alkylated DNA, releasing 3-methyladenine, 3-methylguanine, 7-methylguanine and 7-methyladenine.. Its function is as follows. Hydrolysis of the deoxyribose N-glycosidic bond to excise 3-methyladenine, and 7-methylguanine from the damaged DNA polymer formed by alkylation lesions. The protein is Probable DNA-3-methyladenine glycosylase of Encephalitozoon cuniculi (strain GB-M1) (Microsporidian parasite).